A 302-amino-acid chain; its full sequence is uncharacterized protein (302 aa).

Residues 19 to 90 form the S4 RNA-binding domain; it reads QWLFSVLKTA…GELDILFEDN (72 aa). D138 is a catalytic residue. Residues 182 to 205 form a disordered region; it reads KGTINSPIGRDRSHPTRRRVSPGG.

It belongs to the pseudouridine synthase RluA family.

It carries out the reaction a uridine in RNA = a pseudouridine in RNA. This is an uncharacterized protein from Bacillus subtilis (strain 168).